Reading from the N-terminus, the 537-residue chain is MAKYIFVTGGVVSSLGKGITAASLGRLLKSRGLSVAMQKFDPYINIDPGTMSPYQHGEVFVTEDGAETDLDLGHYERFIDVNLTKNSNVTAGKIYWSVITKERKGDYLGATVQVIPHITDEIKERVYRVAKEKNVDVVITEIGGTVGDIESLPFLEAIRQVAIEQGRENVMFIHVTLVPHLGNTGELKTKPTQHSVKELRSIGIQPDMIVCRTELPLPQELREKIALFCNVSVEAVIENRDVESIYQVPLELERQKVDEYVIKRLNLPLGQSDLKEWREYVEKEKNPEHQVEVALVGKYVDLHDAYISVVEALKHAGVYHKTAVNIRWVNAEKVNDKTVDELLKGADGILVPGGFGDRGIEGKIRAIQYARENKIPYLGLCLGMQCAVIEFARNVAGLKGANSTEFDPNTPHPVIDLMPEQKDIDEKGGTMRLGVYPCKVIEGTKAYEVYKDELVYERHRHRYEFNNQYRELLTSKGLVISGLSPDERLVEIIELKDHPYFVATQFHPEFKSRPLNPHPLFRDFVKAMLNLKINNAE.

Residues 1 to 267 are amidoligase domain; it reads MAKYIFVTGG…DEYVIKRLNL (267 aa). Residue S13 coordinates CTP. Residue S13 coordinates UTP. Residue 14–19 coordinates ATP; it reads SLGKGI. Y54 is an L-glutamine binding site. D71 provides a ligand contact to ATP. D71 and E141 together coordinate Mg(2+). Residues 148–150, 188–193, and K224 each bind CTP; these read DIE and KTKPTQ. Residues 188–193 and K224 each bind UTP; that span reads KTKPTQ. Residue 240–242 participates in ATP binding; the sequence is RDV. The Glutamine amidotransferase type-1 domain occupies 292 to 534; it reads EVALVGKYVD…VKAMLNLKIN (243 aa). G354 provides a ligand contact to L-glutamine. The active-site Nucleophile; for glutamine hydrolysis is the C381. L-glutamine-binding positions include 382 to 385, E405, and R462; that span reads LGMQ. Catalysis depends on residues H507 and E509.

Belongs to the CTP synthase family. Homotetramer.

The enzyme catalyses UTP + L-glutamine + ATP + H2O = CTP + L-glutamate + ADP + phosphate + 2 H(+). It carries out the reaction L-glutamine + H2O = L-glutamate + NH4(+). The catalysed reaction is UTP + NH4(+) + ATP = CTP + ADP + phosphate + 2 H(+). It participates in pyrimidine metabolism; CTP biosynthesis via de novo pathway; CTP from UDP: step 2/2. With respect to regulation, allosterically activated by GTP, when glutamine is the substrate; GTP has no effect on the reaction when ammonia is the substrate. The allosteric effector GTP functions by stabilizing the protein conformation that binds the tetrahedral intermediate(s) formed during glutamine hydrolysis. Inhibited by the product CTP, via allosteric rather than competitive inhibition. Its function is as follows. Catalyzes the ATP-dependent amination of UTP to CTP with either L-glutamine or ammonia as the source of nitrogen. Regulates intracellular CTP levels through interactions with the four ribonucleotide triphosphates. The sequence is that of CTP synthase from Caldanaerobacter subterraneus subsp. tengcongensis (strain DSM 15242 / JCM 11007 / NBRC 100824 / MB4) (Thermoanaerobacter tengcongensis).